Reading from the N-terminus, the 91-residue chain is MNASNWSVYLILCENSAFYCGISPNPQQRLAAHTTGKGAKYTRVFKPVAMRIVAGGMDKGTALRQEIAVKKLTAAQKRQLWEQAEKMPSET.

A GIY-YIG domain is found at 4 to 83 (SNWSVYLILC…AAQKRQLWEQ (80 aa)).

It belongs to the UPF0213 family.

The chain is UPF0213 protein NMC1807 from Neisseria meningitidis serogroup C / serotype 2a (strain ATCC 700532 / DSM 15464 / FAM18).